Consider the following 749-residue polypeptide: Taperin (749 aa).

The interval Pro144 to Glu348 is disordered. Polar residues-rich tracts occupy residues Ser169–Ser179, Leu230–Thr239, and Val250–Gly266. A Phosphoserine modification is found at Ser274. The segment covering Gln323–Asp335 has biased composition (polar residues). Residues Phe337 to Met347 are compositionally biased toward basic and acidic residues. Ser401, Ser457, and Ser501 each carry phosphoserine. 3 disordered regions span residues Glu502 to Glu586, Phe636 to Pro673, and Leu730 to Phe749. 2 stretches are compositionally biased toward polar residues: residues Glu534–Thr544 and His558–Ala570. The segment covering Glu647 to Pro668 has biased composition (acidic residues).

It belongs to the taperin family. As to quaternary structure, interacts with GRXCR2; the interaction restricts TPRN to the stereocilum basal region. Interacts with actin ACTB; the interaction may stabilize stereocilia. Interacts with CLIC5. Interacts with PTPRQ. TPRN, CLIC5 and PTPQR form concentric rings at the base of stereocilia and may form a complex. Interacts with phosphatase PPP1CA; the interaction results in inhibition of PPP1CA phosphatase activity. Interacts with DNA damage response proteins XRCC6/KU70, XRCC5/KU80, PARP1, TOP1 and TOP2A; these interactions recruit TPRN to sites of DNA damage where it may play a role in DNA repair. In terms of tissue distribution, in the organ of Corti, expressed in the inner ear hair cell stereocilia and the supporting cells (at protein level). Expressed in the sensory epithelia of the organ of Corti and vestibular end organs and, to a lesser extent, in Reisner's membrane and the spiral ligament (at protein level). At postnatal day 2, expression is detected in cochlea, liver, brain, kidney, heart and lung.

It is found in the cell projection. Its subcellular location is the stereocilium. The protein resides in the microvillus. The protein localises to the nucleus. It localises to the nucleoplasm. It is found in the cytoplasm. Essential for hearing. Required for maintenance of stereocilia on both inner and outer hair cells. Necessary for the integrity of the stereociliary rootlet. May act as an actin cytoskeleton regulator involved in the regulation of actin dynamics at the pointed end in hair cells. Forms rings at the base of stereocilia and binds actin filaments in the stereocilia which may stabilize the stereocilia. Acts as a strong inhibitor of PPP1CA phosphatase activity. Recruited to sites of DNA damage and may play a role in DNA damage repair. This chain is Taperin (Tprn), found in Mus musculus (Mouse).